The primary structure comprises 293 residues: uncharacterized protein (293 aa).

This is an uncharacterized protein from Acanthamoeba polyphaga (Amoeba).